Consider the following 601-residue polypeptide: Sodium-dependent phosphate transport protein 2C (601 aa).

Residues methionine 1 to alanine 75 lie on the Cytoplasmic side of the membrane. Serine 4 is subject to Phosphoserine. The helical transmembrane segment at cysteine 76 to phenylalanine 96 threads the bilayer. Topologically, residues glutamine 97–aspartate 110 are extracellular. Residues asparagine 111 to valine 131 traverse the membrane as a helical segment. Residues glutamine 132 to alanine 187 lie on the Cytoplasmic side of the membrane. Residues phenylalanine 188–leucine 208 traverse the membrane as a helical segment. The Extracellular portion of the chain corresponds to glutamate 209–alanine 324. Asparagine 210, asparagine 264, asparagine 267, and asparagine 299 each carry an N-linked (GlcNAc...) asparagine glycan. Cysteines 275 and 311 form a disulfide. Residues valine 325–valine 345 form a helical membrane-spanning segment. Topologically, residues lysine 346–proline 369 are cytoplasmic. A helical transmembrane segment spans residues phenylalanine 370–leucine 390. At leucine 391–glutamine 447 the chain is on the extracellular side. A helical transmembrane segment spans residues valine 448–valine 468. The Cytoplasmic segment spans residues leucine 469–arginine 487. Residues tryptophan 488–leucine 508 form a helical membrane-spanning segment. The Extracellular portion of the chain corresponds to serine 509–glycine 512. Residues glycine 513 to valine 533 traverse the membrane as a helical segment. At asparagine 534–leucine 601 the chain is on the cytoplasmic side.

It belongs to the SLC34A transporter family. Highly expressed in the kidney. Not found in any of the other tested tissues.

It localises to the apical cell membrane. It carries out the reaction 2 Na(+)(out) + phosphate(out) = 2 Na(+)(in) + phosphate(in). Involved in actively transporting phosphate into cells via Na(+) cotransport in the renal brush border membrane. The cotransport has a Na(+):Pi stoichiometry of 2:1 and is electroneutral. In Rattus norvegicus (Rat), this protein is Sodium-dependent phosphate transport protein 2C (Slc34a3).